Here is a 239-residue protein sequence, read N- to C-terminus: 7-cyano-7-deazaguanine synthase (239 aa).

16-26 is an ATP binding site; sequence FSGGQDSTTCL. 4 residues coordinate Zn(2+): cysteine 204, cysteine 219, cysteine 222, and cysteine 225.

This sequence belongs to the QueC family. Zn(2+) serves as cofactor.

It carries out the reaction 7-carboxy-7-deazaguanine + NH4(+) + ATP = 7-cyano-7-deazaguanine + ADP + phosphate + H2O + H(+). It participates in purine metabolism; 7-cyano-7-deazaguanine biosynthesis. Functionally, catalyzes the ATP-dependent conversion of 7-carboxy-7-deazaguanine (CDG) to 7-cyano-7-deazaguanine (preQ(0)). In Polaromonas naphthalenivorans (strain CJ2), this protein is 7-cyano-7-deazaguanine synthase.